A 115-amino-acid chain; its full sequence is NADH-ubiquinone oxidoreductase chain 3 (115 aa).

The next 3 helical transmembrane spans lie at 5 to 25 (LTLMTDVALALLLVMIAFWLP), 55 to 75 (FFLVAITFLLFDLEIALLLPL), and 86 to 106 (LMLTMALLLISILAAGLAYEW).

This sequence belongs to the complex I subunit 3 family. Core subunit of respiratory chain NADH dehydrogenase (Complex I) which is composed of 45 different subunits. Interacts with TMEM186. Interacts with TMEM242.

It is found in the mitochondrion inner membrane. It carries out the reaction a ubiquinone + NADH + 5 H(+)(in) = a ubiquinol + NAD(+) + 4 H(+)(out). Core subunit of the mitochondrial membrane respiratory chain NADH dehydrogenase (Complex I) which catalyzes electron transfer from NADH through the respiratory chain, using ubiquinone as an electron acceptor. Essential for the catalytic activity of complex I. This Avahi cleesei (Cleese's woolly lemur) protein is NADH-ubiquinone oxidoreductase chain 3.